The chain runs to 804 residues: Ion-translocating oxidoreductase complex subunit C (804 aa).

2 4Fe-4S ferredoxin-type domains span residues 366-397 (SEMG…QQLY) and 407-436 (KARA…VQYY). [4Fe-4S] cluster is bound by residues C377, C380, C383, C387, C416, C419, C422, and C426. Disordered regions lie at residues 466-532 (RLER…EVRV) and 567-804 (KAAQ…MQED). Low complexity-rich tracts occupy residues 484–495 (SVASSDAGAIAA), 567–582 (KAAQ…APQQ), 592–619 (AAVA…EAPQ), 629–660 (KAAV…QQSA), 668–693 (AAVA…ATEA), 706–731 (AAVA…ATEA), and 744–769 (AAVA…ATEA).

It belongs to the 4Fe4S bacterial-type ferredoxin family. RnfC subfamily. In terms of assembly, the complex is composed of six subunits: RnfA, RnfB, RnfC, RnfD, RnfE and RnfG. [4Fe-4S] cluster is required as a cofactor.

It is found in the cell inner membrane. Part of a membrane-bound complex that couples electron transfer with translocation of ions across the membrane. This is Ion-translocating oxidoreductase complex subunit C from Erwinia tasmaniensis (strain DSM 17950 / CFBP 7177 / CIP 109463 / NCPPB 4357 / Et1/99).